A 604-amino-acid chain; its full sequence is Aspartate--tRNA(Asp/Asn) ligase (604 aa).

Residue E175 coordinates L-aspartate. Residues 199–202 are aspartate; that stretch reads QMFK. L-aspartate is bound by residues R221 and H451. 221–223 lines the ATP pocket; the sequence is RDE. E485 contributes to the ATP binding site. R492 is a binding site for L-aspartate. An ATP-binding site is contributed by 537 to 540; the sequence is GIDR.

Belongs to the class-II aminoacyl-tRNA synthetase family. Type 1 subfamily. In terms of assembly, homodimer.

The protein resides in the cytoplasm. The enzyme catalyses tRNA(Asx) + L-aspartate + ATP = L-aspartyl-tRNA(Asx) + AMP + diphosphate. In terms of biological role, aspartyl-tRNA synthetase with relaxed tRNA specificity since it is able to aspartylate not only its cognate tRNA(Asp) but also tRNA(Asn). Reaction proceeds in two steps: L-aspartate is first activated by ATP to form Asp-AMP and then transferred to the acceptor end of tRNA(Asp/Asn). This is Aspartate--tRNA(Asp/Asn) ligase from Erythrobacter litoralis (strain HTCC2594).